A 1160-amino-acid polypeptide reads, in one-letter code: Major DNA-binding protein (1160 aa).

The Required for filament formation signature appears at 808–809; the sequence is FW. The segment at 1139–1160 is required for nuclear localization; the sequence is ARGGEHAFDEDCGLLPAKRGRL.

Belongs to the herpesviridae major DNA-binding protein family. As to quaternary structure, homooligomers. Forms double-helical filaments necessary for the formation of replication compartments within the host nucleus. Interacts with the origin-binding protein. Interacts with the helicase primase complex; this interaction stimulates primer synthesis activity of the helicase-primase complex. Interacts with the DNA polymerase. Interacts with the alkaline exonuclease; this interaction increases its nuclease processivity.

It is found in the host nucleus. Its function is as follows. Single-stranded DNA-binding protein required for DNA replication. In terms of biological role, plays several crucial roles in viral infection. Participates in the opening of the viral DNA origin to initiate replication by interacting with the origin-binding protein. May disrupt loops, hairpins and other secondary structures present on ssDNA to reduce and eliminate pausing of viral DNA polymerase at specific sites during elongation. Promotes viral DNA recombination by performing strand-transfer, characterized by the ability to transfer a DNA strand from a linear duplex to a complementary single-stranded DNA circle. Can also catalyze the renaturation of complementary single strands. Additionally, reorganizes the host cell nucleus, leading to the formation of prereplicative sites and replication compartments. This process is driven by the protein which can form double-helical filaments in the absence of DNA. The protein is Major DNA-binding protein of Simian cytomegalovirus (strain Colburn).